The primary structure comprises 189 residues: UPF0398 protein BH1768 (189 aa).

The protein belongs to the UPF0398 family.

In Halalkalibacterium halodurans (strain ATCC BAA-125 / DSM 18197 / FERM 7344 / JCM 9153 / C-125) (Bacillus halodurans), this protein is UPF0398 protein BH1768.